Here is a 57-residue protein sequence, read N- to C-terminus: Small ribosomal subunit protein bS21B (57 aa).

Residues 37-57 (RYEKPSARRKRKAEAARKRRR) form a disordered region. The segment covering 43–57 (ARRKRKAEAARKRRR) has biased composition (basic residues).

This sequence belongs to the bacterial ribosomal protein bS21 family.

In Gloeobacter violaceus (strain ATCC 29082 / PCC 7421), this protein is Small ribosomal subunit protein bS21B.